A 232-amino-acid polypeptide reads, in one-letter code: Ion-translocating oxidoreductase complex subunit E (232 aa).

6 helical membrane-spanning segments follow: residues 12–31, 39–59, 69–89, 92–112, 125–145, and 182–202; these read LWRN…LLAV, LGLG…VSAL, IPIY…LINA, FGLY…CIVI, ALAA…LLLL, and PFLL…MLVG.

It belongs to the NqrDE/RnfAE family. In terms of assembly, the complex is composed of six subunits: RnfA, RnfB, RnfC, RnfD, RnfE and RnfG.

The protein localises to the cell inner membrane. Part of a membrane-bound complex that couples electron transfer with translocation of ions across the membrane. This chain is Ion-translocating oxidoreductase complex subunit E, found in Sodalis glossinidius (strain morsitans).